Consider the following 486-residue polypeptide: Protein nucleotidyltransferase YdiU (486 aa).

ATP-binding residues include Gly90, Gly92, Arg93, Lys113, Asp125, Gly126, Arg176, and Arg183. Asp252 acts as the Proton acceptor in catalysis. The Mg(2+) site is built by Asn253 and Asp262. Residue Asp262 participates in ATP binding.

This sequence belongs to the SELO family. Mg(2+) serves as cofactor. It depends on Mn(2+) as a cofactor.

The enzyme catalyses L-seryl-[protein] + ATP = 3-O-(5'-adenylyl)-L-seryl-[protein] + diphosphate. It catalyses the reaction L-threonyl-[protein] + ATP = 3-O-(5'-adenylyl)-L-threonyl-[protein] + diphosphate. The catalysed reaction is L-tyrosyl-[protein] + ATP = O-(5'-adenylyl)-L-tyrosyl-[protein] + diphosphate. It carries out the reaction L-histidyl-[protein] + UTP = N(tele)-(5'-uridylyl)-L-histidyl-[protein] + diphosphate. The enzyme catalyses L-seryl-[protein] + UTP = O-(5'-uridylyl)-L-seryl-[protein] + diphosphate. It catalyses the reaction L-tyrosyl-[protein] + UTP = O-(5'-uridylyl)-L-tyrosyl-[protein] + diphosphate. Its function is as follows. Nucleotidyltransferase involved in the post-translational modification of proteins. It can catalyze the addition of adenosine monophosphate (AMP) or uridine monophosphate (UMP) to a protein, resulting in modifications known as AMPylation and UMPylation. The polypeptide is Protein nucleotidyltransferase YdiU (Pseudomonas aeruginosa (strain UCBPP-PA14)).